The sequence spans 412 residues: Small ribosomal subunit protein mL103 (rPPR7) (412 aa).

A mitochondrion-targeting transit peptide spans 1 to 14; sequence MASSRISLRLVRRF. Residues 21–37 are compositionally biased toward polar residues; that stretch reads GTTTAPSSGKISVSKAK. A disordered region spans residues 21–43; it reads GTTTAPSSGKISVSKAKSTLRKE. PPR repeat units follow at residues 101–135, 136–166, 173–207, 208–242, 243–276, 277–311, 312–346, and 347–377; these read EEPF…GTPR, SAVS…IPQR, DKIS…GMEV, TTIA…GCEL, DNAA…GLKP, DTIS…NCAP, NAAT…HKIP, and DFNT…VKKK.

The protein belongs to the PPR family. P subfamily. As to quaternary structure, component of the mitochondrial ribosome small subunit.

The protein resides in the mitochondrion. This is Small ribosomal subunit protein mL103 (rPPR7) from Arabidopsis thaliana (Mouse-ear cress).